Consider the following 328-residue polypeptide: tRNA uridine(34) hydroxylase (328 aa).

The region spanning 130–224 (LDEDTIVLDT…YGKDPEVQGE (95 aa)) is the Rhodanese domain. C184 serves as the catalytic Cysteine persulfide intermediate.

Belongs to the TrhO family.

The enzyme catalyses uridine(34) in tRNA + AH2 + O2 = 5-hydroxyuridine(34) in tRNA + A + H2O. In terms of biological role, catalyzes oxygen-dependent 5-hydroxyuridine (ho5U) modification at position 34 in tRNAs. This chain is tRNA uridine(34) hydroxylase, found in Streptococcus uberis (strain ATCC BAA-854 / 0140J).